Here is a 75-residue protein sequence, read N- to C-terminus: Sperm-specific protein PL-I (75 aa).

The H15 domain occupies 2–74 (GSSGMMSMVA…GSAGWVLVPK (73 aa)).

It belongs to the histone H1/H5 family. Sperm.

It is found in the nucleus. Its subcellular location is the chromosome. Its function is as follows. Linker histones are implicated in chromatin remodeling and/or transcriptional regulation during spermiogenesis, the process of spermatid maturation into spermatozoa. The sequence is that of Sperm-specific protein PL-I from Spisula solidissima (Atlantic surf-clam).